The chain runs to 345 residues: MKFLDQAKVYVRSGDGGAGCVSFRREKFIEFGGPDGGNGGRGGDVWIECVDGLNTLIDYRYQQHFKAKKGEHGMGANRAGAKGSDVVLRVPAGTQVLDEDEETILADLTEVGQRIRLLSGGNGGFGNAEFKTSTNQAPRRANPGLEGQEKWIWLRLKLIADAGLVGLPNAGKSTFLAATTAAKPKIADYPFTTLHPGLGVVRVDGREFVLADIPGLIEGAHEGAGLGDRFLGHVERCRVLLHLVDGTCEHAGKAYKTVRQELVAYGGGLEDRVEIVALSKIDSLTPELLKQQKERLQRAAKKKPLLLSSQSGKGVPEALRALLAVIDEGREAEVAEARKTEWRPI.

The Obg domain occupies 1–159; that stretch reads MKFLDQAKVY…KWIWLRLKLI (159 aa). Positions 160–327 constitute an OBG-type G domain; it reads ADAGLVGLPN…ALRALLAVID (168 aa). GTP-binding positions include 166–173, 191–195, 212–215, 279–282, and 308–310; these read GLPNAGKS, FTTLH, DIPG, SKID, and SSQ. Mg(2+) is bound by residues S173 and T193.

It belongs to the TRAFAC class OBG-HflX-like GTPase superfamily. OBG GTPase family. As to quaternary structure, monomer. Mg(2+) serves as cofactor.

The protein resides in the cytoplasm. Its function is as follows. An essential GTPase which binds GTP, GDP and possibly (p)ppGpp with moderate affinity, with high nucleotide exchange rates and a fairly low GTP hydrolysis rate. Plays a role in control of the cell cycle, stress response, ribosome biogenesis and in those bacteria that undergo differentiation, in morphogenesis control. The polypeptide is GTPase Obg (Azorhizobium caulinodans (strain ATCC 43989 / DSM 5975 / JCM 20966 / LMG 6465 / NBRC 14845 / NCIMB 13405 / ORS 571)).